Here is a 596-residue protein sequence, read N- to C-terminus: Aspartate--tRNA(Asp/Asn) ligase (596 aa).

Position 172 (Glu172) interacts with L-aspartate. Positions 196–199 (QLFK) are aspartate. Arg218 contributes to the L-aspartate binding site. ATP-binding positions include 218-220 (RDE) and Gln227. His455 serves as a coordination point for L-aspartate. Glu489 lines the ATP pocket. An L-aspartate-binding site is contributed by Arg496. 541–544 (GLDR) provides a ligand contact to ATP.

This sequence belongs to the class-II aminoacyl-tRNA synthetase family. Type 1 subfamily. As to quaternary structure, homodimer.

The protein localises to the cytoplasm. It carries out the reaction tRNA(Asx) + L-aspartate + ATP = L-aspartyl-tRNA(Asx) + AMP + diphosphate. Its function is as follows. Aspartyl-tRNA synthetase with relaxed tRNA specificity since it is able to aspartylate not only its cognate tRNA(Asp) but also tRNA(Asn). Reaction proceeds in two steps: L-aspartate is first activated by ATP to form Asp-AMP and then transferred to the acceptor end of tRNA(Asp/Asn). In Bordetella bronchiseptica (strain ATCC BAA-588 / NCTC 13252 / RB50) (Alcaligenes bronchisepticus), this protein is Aspartate--tRNA(Asp/Asn) ligase.